The chain runs to 217 residues: Elongation factor Ts (217 aa).

Positions 82–85 are involved in Mg(2+) ion dislocation from EF-Tu; the sequence is TDFV.

Belongs to the EF-Ts family.

It is found in the cytoplasm. Associates with the EF-Tu.GDP complex and induces the exchange of GDP to GTP. It remains bound to the aminoacyl-tRNA.EF-Tu.GTP complex up to the GTP hydrolysis stage on the ribosome. This chain is Elongation factor Ts, found in Desulfitobacterium hafniense (strain DSM 10664 / DCB-2).